The sequence spans 978 residues: Mast/stem cell growth factor receptor Kit (978 aa).

The N-terminal stretch at 1-25 (MRGARGAWDFLFVLLLLLLVQTGSS) is a signal peptide. Residues 26–525 (QPSVSPGELS…QIHAHTLFTP (500 aa)) are Extracellular-facing. Ig-like C2-type domains are found at residues 27–112 (PSVS…VFVR), 121–205 (DLPL…LKVR), 212–309 (PVVS…LEVV), 318–411 (PMMN…VNVN), and 414–508 (PEIL…FNFA). An intrachain disulfide couples C58 to C97. N94, N130, and N145 each carry an N-linked (GlcNAc...) asparagine glycan. Disulfide bonds link C136–C186, C151–C183, and C233–C291. N284, N294, N301, N321, N353, N368, N401, N464, and N487 each carry an N-linked (GlcNAc...) asparagine glycan. C429 and C492 form a disulfide bridge. Residues 526–546 (LLIGFVIAAGLMCIFVMILTY) form a helical membrane-spanning segment. Over 547 to 978 (KYLQKPMYEV…TQPLLVHEDV (432 aa)) the chain is Cytoplasmic. Y548 and Y554 each carry phosphotyrosine. Y569 is a binding site for Mg(2+). Phosphotyrosine; by autocatalysis is present on residues Y569 and Y571. Residues 569 to 571 (YVY) form an important for interaction with phosphotyrosine-binding proteins region. The Protein kinase domain occupies 590-939 (LSFGKTLGAG…ISESTNHIYS (350 aa)). ATP-binding positions include 597-604 (GAGAFGKV), K624, and 672-678 (EYCCYGD). 2 positions are modified to phosphotyrosine; by autocatalysis: Y704 and Y722. Position 731 is a phosphotyrosine (Y731). S743 and S748 each carry phosphoserine; by PKC/PRKCA. Catalysis depends on D794, which acts as the Proton acceptor. Position 798 (R798) interacts with ATP. N799 and D812 together coordinate Mg(2+). S823 bears the Phosphoserine mark. A Phosphotyrosine; by autocatalysis modification is found at Y825. S893 carries the phosphoserine modification. Y902 carries the post-translational modification Phosphotyrosine. Y938 is subject to Phosphotyrosine; by autocatalysis. A Phosphoserine modification is found at S961.

This sequence belongs to the protein kinase superfamily. Tyr protein kinase family. CSF-1/PDGF receptor subfamily. Monomer in the absence of bound KITLG/SCF. Homodimer in the presence of bound KITLG/SCF, forming a heterotetramer with two KITLG/SCF molecules. Interacts (via phosphorylated tyrosine residues) with the adapter proteins GRB2 and GRB7 (via SH2 domain), and SH2B2/APS. Interacts (via C-terminus) with MPDZ (via the tenth PDZ domain). Interacts (via phosphorylated tyrosine residues) with PIK3R1 and PIK3CD. Interacts (via phosphorylated tyrosine) with CRK (isoform Crk-II), FYN, SHC1 and MATK/CHK (via SH2 domain). Interacts with LYN and FES/FPS. Interacts (via phosphorylated tyrosine residues) with the protein phosphatases PTPN6/SHP-1 (via SH2 domain), PTPN11/SHP-2 (via SH2 domain) and PTPRU. Interacts with PLCG1. Interacts with DOK1 and TEC. Interacts with IL1RAP (independent of stimulation with KITLG/SCF). A mast cell-specific KITLG/SCF-induced interleukin-33 signaling complex contains IL1RL1, IL1RAP, KIT and MYD88. Ubiquitinated by SOCS6. KIT is rapidly ubiquitinated after autophosphorylation induced by KITLG/SCF binding, leading to internalization and degradation. In terms of processing, autophosphorylated on tyrosine residues. KITLG/SCF binding promotes autophosphorylation. Phosphorylated tyrosine residues are important for interaction with specific binding partners.

It localises to the cell membrane. The catalysed reaction is L-tyrosyl-[protein] + ATP = O-phospho-L-tyrosyl-[protein] + ADP + H(+). With respect to regulation, present in an inactive conformation in the absence of bound ligand. KITLG/SCF binding leads to dimerization and activation by autophosphorylation on tyrosine residues. Activity is down-regulated by PRKCA-mediated phosphorylation on serine residues. In terms of biological role, tyrosine-protein kinase that acts as a cell-surface receptor for the cytokine KITLG/SCF and plays an essential role in the regulation of cell survival and proliferation, hematopoiesis, stem cell maintenance, gametogenesis, mast cell development, migration and function, and in melanogenesis. In response to KITLG/SCF binding, KIT can activate several signaling pathways. Phosphorylates PIK3R1, PLCG1, SH2B2/APS and CBL. Activates the AKT1 signaling pathway by phosphorylation of PIK3R1, the regulatory subunit of phosphatidylinositol 3-kinase. Activated KIT also transmits signals via GRB2 and activation of RAS, RAF1 and the MAP kinases MAPK1/ERK2 and/or MAPK3/ERK1. Promotes activation of STAT family members STAT1, STAT3, STAT5A and STAT5B. Activation of PLCG1 leads to the production of the cellular signaling molecules diacylglycerol and inositol 1,4,5-trisphosphate. KIT signaling is modulated by protein phosphatases, and by rapid internalization and degradation of the receptor. Activated KIT promotes phosphorylation of the protein phosphatases PTPN6/SHP-1 and PTPRU, and of the transcription factors STAT1, STAT3, STAT5A and STAT5B. Promotes phosphorylation of PIK3R1, CBL, CRK (isoform Crk-II), LYN, MAPK1/ERK2 and/or MAPK3/ERK1, PLCG1, SRC and SHC1. The chain is Mast/stem cell growth factor receptor Kit (KIT) from Capra hircus (Goat).